Here is a 370-residue protein sequence, read N- to C-terminus: Protein PELPK1 (370 aa).

The signal sequence occupies residues 1–34 (MALMKKSLSAALLSSPLLIICLIALLADPFSVGA). 52 consecutive repeat copies span residues 43–47 (PEIPK), 49–53 (PELPK), 54–58 (FEVPK), 60–64 (PEFPK), 65–69 (PELPK), 71–75 (PEFPK), 76–80 (PELPK), 82–86 (PEIPK), 87–91 (PELPK), 93–97 (PEIPK), 98–102 (PEETK), 104–108 (PDIPK), 109–113 (LELPK), 115–119 (PEIPK), 120–124 (PELPK), 126–130 (PEIPK), 131–135 (PELPK), 137–141 (PEIQK), 142–146 (PELPK), 148–152 (PEIPK), 153–157 (PELPK), 159–163 (PEIPK), 164–168 (PDLPK), 175–179 (PEVPK), 186–190 (PEAPK), 192–196 (PEIPK), 197–201 (PELPK), 203–207 (PEVPK), 214–218 (PEIQK), 219–223 (PELPK), 225–229 (PELPK), 231–235 (PEIQK), 236–240 (PELPK), 242–246 (PEVPK), 247–251 (LEAPK), 253–257 (PEIQK), 258–262 (PELPK), 264–268 (PELPK), 270–274 (PEIQK), 275–279 (PELPK), 281–285 (PEIQK), 286–290 (PELPK), 292–296 (PEVPK), 303–307 (PEVPK), 314–318 (PEIPK), 319–323 (PELPK), 325–329 (PEVPK), 330–334 (PELPK), 336–340 (PEITK), 344–348 (PEIPK), 355–359 (PQLPK), and 361–365 (PEFPK). Residues 43–365 (PEIPKLPELP…QLPKLPEFPK (323 aa)) are 52 X 5 AA tandem repeat of P-[DEGQ]-[AEFLIV]-[QPT]-K. Basic and acidic residues predominate over residues 65–223 (PELPKLPEFP…PEIQKPELPK (159 aa)). Positions 65–370 (PELPKLPEFP…PEFPKVPGTP (306 aa)) are disordered. Over residues 232–262 (EIQKPELPKLPEVPKLEAPKVPEIQKPELPK) the composition is skewed to basic and acidic residues. 2 stretches are compositionally biased toward basic and acidic residues: residues 271–296 (EIQK…EVPK) and 306–334 (PKSE…ELPK).

The protein resides in the secreted. The protein localises to the cell wall. In terms of biological role, positive regulator of germination and plant growth. The sequence is that of Protein PELPK1 from Arabidopsis thaliana (Mouse-ear cress).